An 894-amino-acid chain; its full sequence is Alanine--tRNA ligase (894 aa).

It belongs to the class-II aminoacyl-tRNA synthetase family.

It is found in the cytoplasm. It catalyses the reaction tRNA(Ala) + L-alanine + ATP = L-alanyl-tRNA(Ala) + AMP + diphosphate. In terms of biological role, catalyzes the attachment of alanine to tRNA(Ala) in a two-step reaction: alanine is first activated by ATP to form Ala-AMP and then transferred to the acceptor end of tRNA(Ala). Also edits incorrectly charged Ser-tRNA(Ala) and Gly-tRNA(Ala) via its editing domain. In Leuconostoc citreum (strain KM20), this protein is Alanine--tRNA ligase (alaS).